The primary structure comprises 443 residues: ATP-dependent protease ATPase subunit HslU (443 aa).

ATP contacts are provided by residues Ile18, 60 to 65, Asp256, Glu321, and Arg393; that span reads GVGKTE.

The protein belongs to the ClpX chaperone family. HslU subfamily. In terms of assembly, a double ring-shaped homohexamer of HslV is capped on each side by a ring-shaped HslU homohexamer. The assembly of the HslU/HslV complex is dependent on binding of ATP.

It is found in the cytoplasm. In terms of biological role, ATPase subunit of a proteasome-like degradation complex; this subunit has chaperone activity. The binding of ATP and its subsequent hydrolysis by HslU are essential for unfolding of protein substrates subsequently hydrolyzed by HslV. HslU recognizes the N-terminal part of its protein substrates and unfolds these before they are guided to HslV for hydrolysis. The chain is ATP-dependent protease ATPase subunit HslU from Enterobacter sp. (strain 638).